The sequence spans 295 residues: Pyridoxal 5'-phosphate synthase subunit PdxS (295 aa).

Asp25 contacts D-ribose 5-phosphate. Lys82 (schiff-base intermediate with D-ribose 5-phosphate) is an active-site residue. Position 154 (Gly154) interacts with D-ribose 5-phosphate. Residue Arg166 coordinates D-glyceraldehyde 3-phosphate. Residues Gly215 and 236–237 (GS) each bind D-ribose 5-phosphate.

The protein belongs to the PdxS/SNZ family. In the presence of PdxT, forms a dodecamer of heterodimers.

The enzyme catalyses aldehydo-D-ribose 5-phosphate + D-glyceraldehyde 3-phosphate + L-glutamine = pyridoxal 5'-phosphate + L-glutamate + phosphate + 3 H2O + H(+). Its pathway is cofactor biosynthesis; pyridoxal 5'-phosphate biosynthesis. Functionally, catalyzes the formation of pyridoxal 5'-phosphate from ribose 5-phosphate (RBP), glyceraldehyde 3-phosphate (G3P) and ammonia. The ammonia is provided by the PdxT subunit. Can also use ribulose 5-phosphate and dihydroxyacetone phosphate as substrates, resulting from enzyme-catalyzed isomerization of RBP and G3P, respectively. The protein is Pyridoxal 5'-phosphate synthase subunit PdxS of Listeria welshimeri serovar 6b (strain ATCC 35897 / DSM 20650 / CCUG 15529 / CIP 8149 / NCTC 11857 / SLCC 5334 / V8).